The chain runs to 208 residues: Ribonuclease HII (208 aa).

The RNase H type-2 domain maps to 18 to 208 (GFYAGVDEVG…RPVKERLEAC (191 aa)). 3 residues coordinate a divalent metal cation: Asp24, Glu25, and Asp116.

The protein belongs to the RNase HII family. Mn(2+) is required as a cofactor. It depends on Mg(2+) as a cofactor.

It is found in the cytoplasm. It catalyses the reaction Endonucleolytic cleavage to 5'-phosphomonoester.. Its function is as follows. Endonuclease that specifically degrades the RNA of RNA-DNA hybrids. This chain is Ribonuclease HII, found in Shewanella loihica (strain ATCC BAA-1088 / PV-4).